Here is a 552-residue protein sequence, read N- to C-terminus: CTP synthase (552 aa).

An amidoligase domain region spans residues 1-270 (MTKYVFVTGG…DRIICEELKL (270 aa)). Ser-13 lines the CTP pocket. UTP is bound at residue Ser-13. ATP is bound by residues 14–19 (SLGKGI) and Asp-71. Mg(2+) is bound by residues Asp-71 and Glu-144. CTP is bound by residues 151 to 153 (DIE), 191 to 196 (KTKPTQ), and Lys-227. UTP contacts are provided by residues 191–196 (KTKPTQ) and Lys-227. In terms of domain architecture, Glutamine amidotransferase type-1 spans 295–547 (TIGMVGKYVD…VEAALANKQA (253 aa)). Gly-356 contributes to the L-glutamine binding site. The active-site Nucleophile; for glutamine hydrolysis is the Cys-383. L-glutamine-binding positions include 384–387 (LGMQ), Glu-407, and Arg-473. Catalysis depends on residues His-520 and Glu-522.

Belongs to the CTP synthase family. Homotetramer.

The catalysed reaction is UTP + L-glutamine + ATP + H2O = CTP + L-glutamate + ADP + phosphate + 2 H(+). The enzyme catalyses L-glutamine + H2O = L-glutamate + NH4(+). It carries out the reaction UTP + NH4(+) + ATP = CTP + ADP + phosphate + 2 H(+). Its pathway is pyrimidine metabolism; CTP biosynthesis via de novo pathway; CTP from UDP: step 2/2. Allosterically activated by GTP, when glutamine is the substrate; GTP has no effect on the reaction when ammonia is the substrate. The allosteric effector GTP functions by stabilizing the protein conformation that binds the tetrahedral intermediate(s) formed during glutamine hydrolysis. Inhibited by the product CTP, via allosteric rather than competitive inhibition. In terms of biological role, catalyzes the ATP-dependent amination of UTP to CTP with either L-glutamine or ammonia as the source of nitrogen. Regulates intracellular CTP levels through interactions with the four ribonucleotide triphosphates. The protein is CTP synthase of Burkholderia ambifaria (strain MC40-6).